Reading from the N-terminus, the 118-residue chain is Ly-6/neurotoxin-like protein 1 (118 aa).

The first 22 residues, 1–22 (MTPLLTLFLVVLMGLPLAPVQA), serve as a signal peptide directing secretion. Positions 23–107 (LDCHVCAYNG…LAIPATLALA (85 aa)) constitute a UPAR/Ly6 domain. 5 cysteine pairs are disulfide-bonded: Cys-25–Cys-48, Cys-28–Cys-35, Cys-41–Cys-66, Cys-70–Cys-87, and Cys-88–Cys-93. Ser-95 carries the GPI-anchor amidated serine lipid modification. A propeptide spans 96–118 (AGLAIPATLALAPVLLATLWGLL) (removed in mature form).

Interacts with nAChRs containing alpha-4:beta-2 (CHRNA4:CHRNB2) and alpha-7 (CHRNA7) subunits. Interacts with CHRNA4 probably in the endoplasmic reticulum prior to nAChR pentameric assembly. Interacts with KCNA2/Potassium voltage-gated channel subfamily A member 2. As to expression, expressed in lung predominantly in airway epithelial cells, submucous glands, and smooth muscle cells, in endothelial and smooth muscle cells in vessel walls and in alveolar type II cells (at protein level). Also expressed in brain.

The protein resides in the cell membrane. It localises to the cell projection. Its subcellular location is the dendrite. It is found in the endoplasmic reticulum. Functionally, acts in different tissues through interaction to nicotinic acetylcholine receptors (nAChRs). The proposed role as modulator of nAChR activity seems to be dependent on the nAChR subtype and stoichiometry, and to involve an effect on nAChR trafficking and its cell surface expression, and on single channel properties of the nAChR inserted in the plasma membrane. Modulates functional properties of nicotinic acetylcholine receptors (nAChRs) to prevent excessive excitation, and hence neurodegeneration. Enhances desensitization by increasing both the rate and extent of desensitization of alpha-4:beta-2-containing nAChRs and slowing recovery from desensitization. Promotes large amplitude ACh-evoked currents through alpha-4:beta-2 nAChRs. Is involved in regulation of the nAChR pentameric assembly in the endoplasmic reticulum. Shifts stoichiometry from high sensitivity alpha-4(2):beta-2(3) to low sensitivity alpha-4(3):beta-2(2) nAChR. In vitro modulates alpha-3:beta-4-containing nAChRs. Reduces cell surface expression of (alpha-3:beta-4)(2):beta-4 and (alpha-3:beta-4)(2):alpha-5 nAChRs suggesting an interaction with nAChR alpha-3(-):(+)beta-4 subunit interfaces and an allosteric mode. Corresponding single channel effects characterized by decreased unitary conductance, altered burst proportions and enhanced desensitization/inactivation seem to depend on nAChR alpha:alpha subunit interfaces and are greater in (alpha-3:beta-2)(2):alpha-3 when compared to (alpha-3:beta-2)(2):alpha-5 nAChRs. Prevents plasticity in the primary visual cortex late in life. This Macaca mulatta (Rhesus macaque) protein is Ly-6/neurotoxin-like protein 1.